An 842-amino-acid chain; its full sequence is 9-beta-pimara-7,15-diene synthase, chloroplastic (842 aa).

A chloroplast-targeting transit peptide spans 1 to 56 (MASPMEAVARSSLVLAPRRRRALGLLPAAAAAAPFVLDCRRRHNGGMRRPHVSFAC). 5 residues coordinate Mg(2+): Asp-591, Asp-595, Asn-735, Ser-739, and Glu-743. Positions 591–595 (DDFFD) match the DDXXD motif motif.

It belongs to the terpene synthase family. The cofactor is Mg(2+). In terms of tissue distribution, expressed in roots.

The protein resides in the plastid. Its subcellular location is the chloroplast. The enzyme catalyses 9alpha-copalyl diphosphate = 9beta-pimara-7,15-diene + diphosphate. In terms of biological role, involved in the biosynthesis of momilactone A and B phytoalexins. Catalyzes the conversion of syn-copalyl diphosphate to the phytoalexin precursor syn-pimara-7,15-diene. This Oryza sativa subsp. japonica (Rice) protein is 9-beta-pimara-7,15-diene synthase, chloroplastic.